We begin with the raw amino-acid sequence, 156 residues long: Cyanate hydratase (156 aa).

Catalysis depends on residues Arg-96, Glu-99, and Ser-122.

This sequence belongs to the cyanase family.

The catalysed reaction is cyanate + hydrogencarbonate + 3 H(+) = NH4(+) + 2 CO2. Its function is as follows. Catalyzes the reaction of cyanate with bicarbonate to produce ammonia and carbon dioxide. In Burkholderia thailandensis (strain ATCC 700388 / DSM 13276 / CCUG 48851 / CIP 106301 / E264), this protein is Cyanate hydratase.